A 376-amino-acid polypeptide reads, in one-letter code: Protein RecA (376 aa).

An ATP-binding site is contributed by 66-73 (GPESSGKT). The segment at 329-376 (VGVKPEDLTAEPGADAAGAAADAEAPAKSVPAPAAKSAKGSKAAAAKS) is disordered. Positions 338–376 (AEPGADAAGAAADAEAPAKSVPAPAAKSAKGSKAAAAKS) are enriched in low complexity.

The protein belongs to the RecA family.

It is found in the cytoplasm. Its function is as follows. Can catalyze the hydrolysis of ATP in the presence of single-stranded DNA, the ATP-dependent uptake of single-stranded DNA by duplex DNA, and the ATP-dependent hybridization of homologous single-stranded DNAs. It interacts with LexA causing its activation and leading to its autocatalytic cleavage. In Streptomyces rimosus, this protein is Protein RecA.